A 266-amino-acid polypeptide reads, in one-letter code: MDKNGPIGIIDSGVGGITVLKRLLEILPEEDYIYFGDTLRVPYGNRPKEEIEKFTREIVNYLKKQKVKAVVIACNTICSSINKNDYEILMFGILEAGIKSAVEATSNGRIGVIATKRTVESEAYLKGIKRLNRNAMVFQKACPELVLIVENGFYEASSIYSAVKKCTEEFLEKDIDTLVLGCTHFPILLPFIERVVDNKVTVVDPAIKLAHEVKKYLVENNLVKDKKGGQIRFLVTGEKENFIKVAGTFLNDKHIDVLRIAIEELK.

Substrate contacts are provided by residues 11–12 (DS) and 43–44 (YG). Catalysis depends on cysteine 74, which acts as the Proton donor/acceptor. Substrate is bound at residue 75 to 76 (NT). Cysteine 182 functions as the Proton donor/acceptor in the catalytic mechanism. 183–184 (TH) lines the substrate pocket.

Belongs to the aspartate/glutamate racemases family.

The enzyme catalyses L-glutamate = D-glutamate. It functions in the pathway cell wall biogenesis; peptidoglycan biosynthesis. In terms of biological role, provides the (R)-glutamate required for cell wall biosynthesis. The polypeptide is Glutamate racemase 1 (Caldanaerobacter subterraneus subsp. tengcongensis (strain DSM 15242 / JCM 11007 / NBRC 100824 / MB4) (Thermoanaerobacter tengcongensis)).